Here is a 792-residue protein sequence, read N- to C-terminus: LPS-assembly protein LptD (792 aa).

A signal peptide spans 1 to 22 (MYRVLRLLPLPLSVAISLSALA).

Belongs to the LptD family. Component of the lipopolysaccharide transport and assembly complex. Interacts with LptE and LptA.

The protein localises to the cell outer membrane. In terms of biological role, together with LptE, is involved in the assembly of lipopolysaccharide (LPS) at the surface of the outer membrane. The sequence is that of LPS-assembly protein LptD from Xylella fastidiosa (strain Temecula1 / ATCC 700964).